The primary structure comprises 428 residues: Enolase (428 aa).

Gln163 lines the (2R)-2-phosphoglycerate pocket. The active-site Proton donor is the Glu205. Mg(2+) is bound by residues Asp242, Glu286, and Asp313. (2R)-2-phosphoglycerate is bound by residues Lys338, Arg367, Ser368, and Lys389. Lys338 serves as the catalytic Proton acceptor.

It belongs to the enolase family. Mg(2+) is required as a cofactor.

It is found in the cytoplasm. It localises to the secreted. The protein localises to the cell surface. The enzyme catalyses (2R)-2-phosphoglycerate = phosphoenolpyruvate + H2O. It participates in carbohydrate degradation; glycolysis; pyruvate from D-glyceraldehyde 3-phosphate: step 4/5. Its function is as follows. Catalyzes the reversible conversion of 2-phosphoglycerate (2-PG) into phosphoenolpyruvate (PEP). It is essential for the degradation of carbohydrates via glycolysis. The chain is Enolase from Verminephrobacter eiseniae (strain EF01-2).